The chain runs to 347 residues: UPF0324 membrane protein Atu0671 (347 aa).

Transmembrane regions (helical) follow at residues 15–37, 50–72, 105–127, 140–162, 172–194, 201–223, 233–250, 263–282, 287–309, and 322–344; these read LRWLSPLLPGILICAAVSCAAIL, WLGDLVLAILIGTLLRSLVSLPV, AGGLLIGGIALIVALSLVFSYAA, LIACGNSICGNSAIAAAAPAIGA, AFTAVLGVVAVLLMPFLPQLLGL, IFAGLTVYAVPQVLAATAPLGAV, LIRVLMLGPVIATLSVIH, MVPWFIIGFVLMIMARSFGL, LLSPVASLSNILTIMSMAALGLS, and VIIAASLSLVLLGVLSFGLILLT.

It belongs to the UPF0324 family.

It localises to the cell membrane. The protein is UPF0324 membrane protein Atu0671 of Agrobacterium fabrum (strain C58 / ATCC 33970) (Agrobacterium tumefaciens (strain C58)).